Here is a 211-residue protein sequence, read N- to C-terminus: Thymidylate kinase (211 aa).

ATP is bound at residue 12 to 19; the sequence is GIDGSGKS.

It belongs to the thymidylate kinase family.

It catalyses the reaction dTMP + ATP = dTDP + ADP. Its function is as follows. Phosphorylation of dTMP to form dTDP in both de novo and salvage pathways of dTTP synthesis. This chain is Thymidylate kinase, found in Ruegeria pomeroyi (strain ATCC 700808 / DSM 15171 / DSS-3) (Silicibacter pomeroyi).